The chain runs to 43 residues: Potassium channel toxin gamma-KTx 4.3 (43 aa).

Disulfide bonds link Cys5-Cys23, Cys11-Cys34, Cys20-Cys39, and Cys24-Cys41.

Belongs to the ergtoxin family. Gamma-KTx 4 subfamily. Expressed by the venom gland.

It localises to the secreted. Reversibly blocks Kv11/ERG potassium channels. This Centruroides exilicauda (Bark scorpion) protein is Potassium channel toxin gamma-KTx 4.3.